A 237-amino-acid polypeptide reads, in one-letter code: Uridylate kinase (237 aa).

Lys12–Gly15 serves as a coordination point for ATP. The involved in allosteric activation by GTP stretch occupies residues Gly20–Gly25. Gly54 is a binding site for UMP. Gly55 and Arg59 together coordinate ATP. UMP contacts are provided by residues Asp74 and Thr135–Thr142. Residues Thr162, Tyr168, and Asp171 each contribute to the ATP site.

The protein belongs to the UMP kinase family. As to quaternary structure, homohexamer.

The protein resides in the cytoplasm. It carries out the reaction UMP + ATP = UDP + ADP. The protein operates within pyrimidine metabolism; CTP biosynthesis via de novo pathway; UDP from UMP (UMPK route): step 1/1. With respect to regulation, allosterically activated by GTP. Inhibited by UTP. In terms of biological role, catalyzes the reversible phosphorylation of UMP to UDP. The protein is Uridylate kinase of Haemophilus ducreyi (strain 35000HP / ATCC 700724).